The primary structure comprises 110 residues: Hydrogenase maturation factor HypA (110 aa).

His-2 is a Ni(2+) binding site. Residues Cys-70, Cys-73, Cys-86, and Cys-89 each contribute to the Zn(2+) site.

It belongs to the HypA/HybF family.

Its function is as follows. Involved in the maturation of [NiFe] hydrogenases. Required for nickel insertion into the metal center of the hydrogenase. The sequence is that of Hydrogenase maturation factor HypA from Geobacter sp. (strain M21).